Here is a 330-residue protein sequence, read N- to C-terminus: Stimulated by retinoic acid gene 8 protein homolog (330 aa).

Positions 50–55 (RVARRR) match the Nuclear localization signal (NLS) motif. A coiled-coil region spans residues 88–112 (QVLNKAKSHIPELEQTLDNLLKLKA).

Interacts with XPO1. Interacts with MEIOSIN. In terms of processing, phosphorylated. In terms of tissue distribution, expressed specifically in testis and fetal ovaries.

It is found in the cytoplasm. Its subcellular location is the nucleus. Meiosis-inducer required for the transition into meiosis for both female and male germ cells. In female germ cells, acts downstream of ZGLP1 as a key effector of the meiotic program: required for premeiotic DNA replication and subsequent events in meiotic prophase. During spermatogenesis, next to its role in meiotic initiation, promotes (but is not required for) spermatogonial differentiation. In complex with MEIOSIN, directly activates the transcription of a subset of critical meiotic genes playing a central role in cell-cycle switching from mitosis to meiosis. The protein is Stimulated by retinoic acid gene 8 protein homolog of Homo sapiens (Human).